A 156-amino-acid chain; its full sequence is Deoxyuridine 5'-triphosphate nucleotidohydrolase (156 aa).

Residues 76 to 78 (RSG), asparagine 89, 93 to 95 (TVD), and lysine 103 each bind substrate.

Belongs to the dUTPase family. It depends on Mg(2+) as a cofactor.

It carries out the reaction dUTP + H2O = dUMP + diphosphate + H(+). It participates in pyrimidine metabolism; dUMP biosynthesis; dUMP from dCTP (dUTP route): step 2/2. This enzyme is involved in nucleotide metabolism: it produces dUMP, the immediate precursor of thymidine nucleotides and it decreases the intracellular concentration of dUTP so that uracil cannot be incorporated into DNA. The sequence is that of Deoxyuridine 5'-triphosphate nucleotidohydrolase from Rhizobium rhizogenes (strain K84 / ATCC BAA-868) (Agrobacterium radiobacter).